Reading from the N-terminus, the 160-residue chain is Early E3 18.5 kDa glycoprotein (160 aa).

The first 17 residues, 1 to 17, serve as a signal peptide directing secretion; it reads MIRYIILGLLTLASAHG. The Lumenal segment spans residues 18-124; that stretch reads TTQKVDFKEP…PPQNCVENTG (107 aa). 2 disulfide bridges follow: C29–C46 and C40–C101. N-linked (GlcNAc...) asparagine; by host glycosylation is found at N30 and N79. The chain crosses the membrane as a helical span at residues 125 to 145; it reads TFCCTAMLITVLALVCTLLYI. The Cytoplasmic segment spans residues 146 to 160; that stretch reads KYKSRRSFIEEKKMP. Residues 157 to 160 carry the Di-lysine motif motif; it reads KKMP.

This sequence belongs to the adenoviridae E19 family. Post-translationally, both disulfide bonds are absolutely critical for the interaction with MHC antigens. N-glycosylated; high-mannose.

Its subcellular location is the host endoplasmic reticulum membrane. Binds and retains class I heavy chains in the endoplasmic reticulum during the early period of virus infection, thereby impairing their transport to the cell surface. Also delays the expression of class I alleles that it cannot affect by direct retention. Binds transporters associated with antigen processing (TAP) and acts as a tapasin inhibitor, preventing class I/TAP association. In consequence, infected cells are masked for immune recognition by cytotoxic T-lymphocytes. The protein is Early E3 18.5 kDa glycoprotein of Homo sapiens (Human).